The following is a 306-amino-acid chain: uncharacterized protein (306 aa).

It to M.tuberculosis Rv1486c, M.bovis Mb1522c and M.leprae ML1804.

This is an uncharacterized protein from Mycobacterium avium.